Here is a 261-residue protein sequence, read N- to C-terminus: Matrix metalloproteinase-26 (261 aa).

A signal peptide spans 1–17 (MQLVILRVTIFLPWCFA). Residues 18–89 (VPVPPAADHK…PHCGVPDGSD (72 aa)) constitute a propeptide that is removed on maturation. Residue asparagine 64 is glycosylated (N-linked (GlcNAc...) asparagine). Residues 80–87 (PHCGVPDG) carry the Cysteine switch motif. Residues cysteine 82 and histidine 208 each coordinate Zn(2+). Glutamate 209 is an active-site residue. The Zn(2+) site is built by histidine 212 and histidine 218. An N-linked (GlcNAc...) asparagine glycan is attached at asparagine 221.

This sequence belongs to the peptidase M10A family. The cofactor is Zn(2+). Requires Ca(2+) as cofactor. Expressed specifically in uterus and placenta. Is also widely expressed in malignant tumors from different sources as well as in diverse tumor cell lines.

Its subcellular location is the secreted. The protein localises to the extracellular space. It is found in the extracellular matrix. Its function is as follows. May hydrolyze collagen type IV, fibronectin, fibrinogen, beta-casein, type I gelatin and alpha-1 proteinase inhibitor. Is also able to activate progelatinase B. The polypeptide is Matrix metalloproteinase-26 (MMP26) (Homo sapiens (Human)).